Here is a 76-residue protein sequence, read N- to C-terminus: Putative small nuclear ribonucleoprotein G-like protein 15 (76 aa).

Residues 4–76 enclose the Sm domain; it reads AHPPELKKFT…IIMLEALERV (73 aa).

It belongs to the snRNP Sm proteins family.

The protein resides in the nucleus. Associated with snRNP U1, U2, U4/U6 and U5. The sequence is that of Putative small nuclear ribonucleoprotein G-like protein 15 (SNRPGP15) from Homo sapiens (Human).